A 78-amino-acid polypeptide reads, in one-letter code: Defensin-like protein (78 aa).

The N-terminal stretch at 1-31 (MGRSIRLFATFFLIAMLFLSTEMGPMTSAEA) is a signal peptide. 4 cysteine pairs are disulfide-bonded: cysteine 34–cysteine 78, cysteine 45–cysteine 65, cysteine 51–cysteine 72, and cysteine 55–cysteine 74.

This sequence belongs to the DEFL family. In terms of tissue distribution, predominantly expressed in the pistil during all stages of flower development.

Its subcellular location is the secreted. In terms of biological role, may be involved in the defense of the pistil against pathogen infection. This chain is Defensin-like protein, found in Petunia integrifolia (Violet-flowered petunia).